A 478-amino-acid polypeptide reads, in one-letter code: ATP synthase subunit beta (478 aa).

158–165 lines the ATP pocket; that stretch reads GGAGVGKT.

The protein belongs to the ATPase alpha/beta chains family. In terms of assembly, F-type ATPases have 2 components, CF(1) - the catalytic core - and CF(0) - the membrane proton channel. CF(1) has five subunits: alpha(3), beta(3), gamma(1), delta(1), epsilon(1). CF(0) has three main subunits: a(1), b(2) and c(9-12). The alpha and beta chains form an alternating ring which encloses part of the gamma chain. CF(1) is attached to CF(0) by a central stalk formed by the gamma and epsilon chains, while a peripheral stalk is formed by the delta and b chains.

It localises to the cell inner membrane. It catalyses the reaction ATP + H2O + 4 H(+)(in) = ADP + phosphate + 5 H(+)(out). In terms of biological role, produces ATP from ADP in the presence of a proton gradient across the membrane. The catalytic sites are hosted primarily by the beta subunits. This is ATP synthase subunit beta from Rhizobium leguminosarum bv. trifolii (strain WSM2304).